A 469-amino-acid polypeptide reads, in one-letter code: MSQAYSSSQRVSSYRRTFGGAGGFPLGSPLGSPVFPRAGFGTKGSSSSVTSRVYQVSRTSGGAGGLGALRAGRLGTGRAPSYSAGELLDFSLADAVNQEFLTTRTNEKVELQELNDRFANYIEKVRFLEQQNAALAAEVNRLKGREPTRVAEIYEEELRELRRQVEVLTNQRARVDVERDNLLDDLQRLKAKLQEEIQLKEEAENNLAAFRADVDAATLARIDLERRIESLNEEIAFLKKVHEEEIRELQAQLQEQQVQVEMDMSKPDLTAALRDIRAQYETIAAKNISEAEEWYKSKVSDLTQAANKNNDALRQAKQEMMEYRHQIQSYTCEIDALKGTNDSLMRQMREMEDRFASEASGYQDNIARLEEEIRHLKDEMARHLREYQDLLNVKMALDVEIATYRKLLEGEESRINLPIQTYSALNFRETSPEQRGSEVHTKKTVMIKTIETRDGEVVSEATQQQHEVL.

The interval 2 to 107 (SQAYSSSQRV…QEFLTTRTNE (106 aa)) is head. The residue at position 7 (serine 7) is a Phosphoserine; by CDK1. At serine 12 the chain carries Phosphoserine; by AURKB. At arginine 16 the chain carries Omega-N-methylarginine. Threonine 17 carries the phosphothreonine; by AURKB and ROCK1 modification. Serine 28 and serine 32 each carry phosphoserine; by CDK1. Arginine 37 carries the asymmetric dimethylarginine; alternate modification. Arginine 37 carries the omega-N-methylarginine; alternate modification. Position 45 is a phosphoserine (serine 45). Arginine 58 is modified (ADP-ribosylarginine). Serine 60 bears the Phosphoserine; by AURKB mark. Arginine 70 bears the Omega-N-methylarginine mark. Position 76 is a phosphothreonine; by ROCK1 (threonine 76). Position 81 is a phosphoserine (serine 81). An IF rod domain is found at 107 to 415 (EKVELQELND…KLLEGEESRI (309 aa)). The interval 108-140 (KVELQELNDRFANYIEKVRFLEQQNAALAAEVN) is coil 1A. Positions 141–150 (RLKGREPTRV) are linker 1. The interval 151–251 (AEIYEEELRE…HEEEIRELQA (101 aa)) is coil 1B. A linker 12 region spans residues 252–267 (QLQEQQVQVEMDMSKP). The tract at residues 267–414 (PDLTAALRDI…RKLLEGEESR (148 aa)) is interaction with NEB. Residues 268–286 (DLTAALRDIRAQYETIAAK) are coil 2A. Residues 287–294 (NISEAEEW) are linker 2. 4 positions are modified to phosphoserine: serine 289, serine 357, serine 360, and serine 423. Positions 295-411 (YKSKVSDLTQ…ATYRKLLEGE (117 aa)) are coil 2B. The segment at 412-469 (ESRINLPIQTYSALNFRETSPEQRGSEVHTKKTVMIKTIETRDGEVVSEATQQQHEVL) is tail. The interval 437–452 (SEVHTKKTVMIKTIET) is interaction with CRYAB.

Belongs to the intermediate filament family. In terms of assembly, homomer. Interacts with DST. Interacts with MTM1. Interacts with EPPK1; interaction is dependent of higher-order structure of intermediate filament. Interacts with CRYAB. Interacts with NEB (via nebulin repeats 160-164). Interacts (via rod region) with NEBL (via nebulin repeats 1-5). Interacts with ASB2; the interaction targets DES for proteasomal degradation. Interacts with PKP1. Interacts with FLII. In terms of processing, ADP-ribosylation prevents ability to form intermediate filaments. Post-translationally, phosphorylation at Ser-7, Ser-28 and Ser-32 by CDK1, phosphorylation at Ser-60 by AURKB and phosphorylation at Thr-76 by ROCK1 contribute to efficient separation of desmin intermediate filaments during mitosis. Ubiquitination by a SCF-like complex containing ASB2 leads to proteasomal degradation.

The protein localises to the cytoplasm. It localises to the myofibril. The protein resides in the sarcomere. Its subcellular location is the z line. It is found in the cell membrane. The protein localises to the sarcolemma. It localises to the nucleus. The protein resides in the cell tip. Its subcellular location is the nucleus envelope. Muscle-specific type III intermediate filament essential for proper muscular structure and function. Plays a crucial role in maintaining the structure of sarcomeres, inter-connecting the Z-disks and forming the myofibrils, linking them not only to the sarcolemmal cytoskeleton, but also to the nucleus and mitochondria, thus providing strength for the muscle fiber during activity. In adult striated muscle they form a fibrous network connecting myofibrils to each other and to the plasma membrane from the periphery of the Z-line structures. May act as a sarcomeric microtubule-anchoring protein: specifically associates with detyrosinated tubulin-alpha chains, leading to buckled microtubules and mechanical resistance to contraction. Required for nuclear membrane integrity, via anchoring at the cell tip and nuclear envelope, resulting in maintenance of microtubule-derived intracellular mechanical forces. Contributes to the transcriptional regulation of the NKX2-5 gene in cardiac progenitor cells during a short period of cardiomyogenesis and in cardiac side population stem cells in the adult. Plays a role in maintaining an optimal conformation of nebulette (NEB) on heart muscle sarcomeres to bind and recruit cardiac alpha-actin. The polypeptide is Desmin (DES) (Canis lupus familiaris (Dog)).